The sequence spans 1259 residues: Autism susceptibility gene 2 protein (1259 aa).

Disordered stretches follow at residues 1-87 (MDGP…EEDI), 108-285 (LKPQ…QDCC), 299-470 (CPQV…PPPP), 771-1027 (PNSM…MTVG), and 1119-1146 (REPH…HERG). Basic residues predominate over residues 8–17 (HGLRKKRRSR). Positions 28-41 (GGLGAGAAGGGGAG) are enriched in gly residues. Basic and acidic residues predominate over residues 108–118 (LKPQERVEKRQ). Residues 136–147 (HSKKSRLSHPHH) show a composition bias toward basic residues. Over residues 148–158 (YSSDRENDRNL) the composition is skewed to basic and acidic residues. Positions 177 to 192 (PGQNSCRDSDSESASG) are enriched in polar residues. A compositionally biased stretch (basic and acidic residues) spans 276–285 (RSQEKSQDCC). Residues 289–472 (IFEPVVLKDP…PTALPPPPPL (184 aa)) form an important for regulation of lamellipodia formation region. Composition is skewed to pro residues over residues 331–345 (PPQP…PQGP) and 353–365 (APQP…PRPQ). Residues 386 to 410 (SLSQPLSAYNSSSLSLNSLSSSRSS) are compositionally biased toward low complexity. Polar residues predominate over residues 436–447 (PNHSPLHSFTPT). Over residues 801–810 (PSFPTPPPWL) the composition is skewed to pro residues. 3 stretches are compositionally biased toward basic and acidic residues: residues 813 to 850 (GELE…VEKR), 876 to 935 (IRAH…EAKQ), and 960 to 993 (REAE…HDLP). The segment covering 1125-1134 (SHHHHHHHHP) has biased composition (basic residues). Phosphoserine occurs at positions 1198 and 1233. The interval 1217 to 1259 (LSAPPPLISTLGGRPVSPRRTTPLSAEIRERPPSHTLKDIEAR) is disordered. Positions 1243 to 1259 (EIRERPPSHTLKDIEAR) are enriched in basic and acidic residues.

This sequence belongs to the AUTS2 family. Component of a PRC1-like complex that contains PCGF5, RNF2, CSNK2B, RYBP and AUTS2. Within this complex, interacts directly with PCGF5 and CSNK2B. Interacts with the histone acetyltransferase EP300/p300. Interacts (via Pro-rich region) with PREX1, DOCK1 and ELMO2. Strongly expressed in brain, skeletal muscle and kidney. Also expressed in placenta, lung and leukocytes.

Its subcellular location is the nucleus. It is found in the cytoplasm. The protein localises to the cytoskeleton. The protein resides in the cell projection. It localises to the growth cone. In terms of biological role, component of a Polycomb group (PcG) multiprotein PRC1-like complex, a complex class required to maintain the transcriptionally repressive state of many genes, including Hox genes, throughout development. PcG PRC1 complex acts via chromatin remodeling and modification of histones; it mediates monoubiquitination of histone H2A 'Lys-119', rendering chromatin heritably changed in its expressibility. The PRC1-like complex that contains PCGF5, RNF2, CSNK2B, RYBP and AUTS2 has decreased histone H2A ubiquitination activity, due to the phosphorylation of RNF2 by CSNK2B. As a consequence, the complex mediates transcriptional activation. In the cytoplasm, plays a role in axon and dendrite elongation and in neuronal migration during embryonic brain development. Promotes reorganization of the actin cytoskeleton, lamellipodia formation and neurite elongation via its interaction with RAC guanine nucleotide exchange factors, which then leads to the activation of RAC1. This chain is Autism susceptibility gene 2 protein (AUTS2), found in Homo sapiens (Human).